Here is a 309-residue protein sequence, read N- to C-terminus: Postacrosomal sheath WW domain-binding protein (309 aa).

Positions 45-87 constitute a GRAM domain; the sequence is GRKTGTLFLTSYRVIFITSCSISDPMLSFMMPFDLMTNLTVEQ. 10 consecutive repeat copies span residues 175-181, 182-188, 189-195, 217-223, 224-230, 231-237, 238-244, 245-251, 252-258, and 259-265. The tract at residues 175–265 is 10 X 7 AA tandem repeat of Y-G-X-P-P-X-G; sequence YGAPPAGYGA…PLGYGAPPAG (91 aa). The PPxY motif motif lies at 186–189; that stretch reads PPGY. Positions 251–272 are enriched in low complexity; that stretch reads GYGAPPLGYGAPPAGNEGPPAG. The tract at residues 251 to 309 is disordered; sequence GYGAPPLGYGAPPAGNEGPPAGYRASPAGSGARPQESTAAQAPENEASLPSASSSQVHS. Polar residues predominate over residues 298–309; that stretch reads SLPSASSSQVHS.

Expressed in testis.

May play a role in meiotic resumption and pronuclear formation, mediated by a WW domain-signaling pathway during fertilization. The chain is Postacrosomal sheath WW domain-binding protein (WBP2NL) from Homo sapiens (Human).